We begin with the raw amino-acid sequence, 122 residues long: Large ribosomal subunit protein uL14 (122 aa).

The protein belongs to the universal ribosomal protein uL14 family. Part of the 50S ribosomal subunit. Forms a cluster with proteins L3 and L19. In the 70S ribosome, L14 and L19 interact and together make contacts with the 16S rRNA in bridges B5 and B8.

Its function is as follows. Binds to 23S rRNA. Forms part of two intersubunit bridges in the 70S ribosome. This Leifsonia xyli subsp. xyli (strain CTCB07) protein is Large ribosomal subunit protein uL14.